A 59-amino-acid chain; its full sequence is Potassium channel toxin alpha-KTx 4.5 (59 aa).

A signal peptide spans 1–22 (MKAFYGVLIIFILISMLDLSQQ). Disulfide bonds link Cys29/Cys50, Cys35/Cys55, and Cys39/Cys57. An interaction with Ca(2+)-activated K(+) channels region spans residues 48–55 (GKCMNGKC).

As to expression, expressed by the venom gland.

Its subcellular location is the secreted. Inhibits with low potency Kv1.1/KCNA1, Kv1.2/KCNA2, Kv1.3/KCNA3 and Kv11.1/KCNH2/ERG1 voltage-gated potassium channels. The polypeptide is Potassium channel toxin alpha-KTx 4.5 (Tityus costatus (Brazilian scorpion)).